A 393-amino-acid chain; its full sequence is MANDFLFTSESVSEGHPDKVADQISDAILDAIFKQDPKSRVAAETLCNTGLVVLAGEITTNAHVDYIQVARDTLKRIGYDNTEYGIDYKGCAVLVAYDKQSNDIAQGVDHASDDHLNTGAGDQGLMFGYACNETPELMPAPIYYAHRLVERQAQLRKDGRLPFLRPDAKSQITMHYVDGKPHSIDTVVLSSQHSPEMSNGLTMKPAFIEAVMEDIIKPVCPKEWLTADTKYLINPTGRFVVGGPQGDCGLTGRKIIVDTYGGACPHGGGAFSGKDPSKVDRSAAYAARYVAKNIVAAGLARQCQIQVAYAIGVAKPMNVTVYTEGTGVIPDDKIAELVHELFDLRPKGIIQMLDLLRPIYEKTAAYGHFGREEPEFTWERTDKAQALRAAAGL.

An ATP-binding site is contributed by histidine 16. Residue aspartate 18 coordinates Mg(2+). Glutamate 44 lines the K(+) pocket. 2 residues coordinate L-methionine: glutamate 57 and glutamine 100. A flexible loop region spans residues 100–110 (QSNDIAQGVDH). ATP-binding positions include 167–169 (DAK), 238–239 (RF), aspartate 247, 253–254 (RK), alanine 270, and lysine 274. Aspartate 247 is a binding site for L-methionine. Lysine 278 contacts L-methionine.

The protein belongs to the AdoMet synthase family. Homotetramer; dimer of dimers. Mg(2+) is required as a cofactor. Requires K(+) as cofactor.

It localises to the cytoplasm. It carries out the reaction L-methionine + ATP + H2O = S-adenosyl-L-methionine + phosphate + diphosphate. It functions in the pathway amino-acid biosynthesis; S-adenosyl-L-methionine biosynthesis; S-adenosyl-L-methionine from L-methionine: step 1/1. Catalyzes the formation of S-adenosylmethionine (AdoMet) from methionine and ATP. The overall synthetic reaction is composed of two sequential steps, AdoMet formation and the subsequent tripolyphosphate hydrolysis which occurs prior to release of AdoMet from the enzyme. The protein is S-adenosylmethionine synthase of Albidiferax ferrireducens (strain ATCC BAA-621 / DSM 15236 / T118) (Rhodoferax ferrireducens).